The primary structure comprises 307 residues: Acetyl-coenzyme A carboxylase carboxyl transferase subunit beta (307 aa).

The disordered stretch occupies residues 1–26; it reads MAMAEPQDPKKGDKKTAERRGGGWLS. The segment covering 7–21 has biased composition (basic and acidic residues); the sequence is QDPKKGDKKTAERRG. The 263-residue stretch at 45 to 307 folds into the CoA carboxyltransferase N-terminal domain; sequence LWVKCPDTGE…LMMGRKRQAA (263 aa).

This sequence belongs to the AccD/PCCB family. As to quaternary structure, acetyl-CoA carboxylase is a heterohexamer composed of biotin carboxyl carrier protein (AccB), biotin carboxylase (AccC) and two subunits each of ACCase subunit alpha (AccA) and ACCase subunit beta (AccD).

It localises to the cytoplasm. The catalysed reaction is N(6)-carboxybiotinyl-L-lysyl-[protein] + acetyl-CoA = N(6)-biotinyl-L-lysyl-[protein] + malonyl-CoA. It participates in lipid metabolism; malonyl-CoA biosynthesis; malonyl-CoA from acetyl-CoA: step 1/1. Component of the acetyl coenzyme A carboxylase (ACC) complex. Biotin carboxylase (BC) catalyzes the carboxylation of biotin on its carrier protein (BCCP) and then the CO(2) group is transferred by the transcarboxylase to acetyl-CoA to form malonyl-CoA. This is Acetyl-coenzyme A carboxylase carboxyl transferase subunit beta from Caulobacter vibrioides (strain ATCC 19089 / CIP 103742 / CB 15) (Caulobacter crescentus).